Consider the following 96-residue polypeptide: Aspartyl/glutamyl-tRNA(Asn/Gln) amidotransferase subunit C (96 aa).

The protein belongs to the GatC family. As to quaternary structure, heterotrimer of A, B and C subunits.

It catalyses the reaction L-glutamyl-tRNA(Gln) + L-glutamine + ATP + H2O = L-glutaminyl-tRNA(Gln) + L-glutamate + ADP + phosphate + H(+). The enzyme catalyses L-aspartyl-tRNA(Asn) + L-glutamine + ATP + H2O = L-asparaginyl-tRNA(Asn) + L-glutamate + ADP + phosphate + 2 H(+). Functionally, allows the formation of correctly charged Asn-tRNA(Asn) or Gln-tRNA(Gln) through the transamidation of misacylated Asp-tRNA(Asn) or Glu-tRNA(Gln) in organisms which lack either or both of asparaginyl-tRNA or glutaminyl-tRNA synthetases. The reaction takes place in the presence of glutamine and ATP through an activated phospho-Asp-tRNA(Asn) or phospho-Glu-tRNA(Gln). The chain is Aspartyl/glutamyl-tRNA(Asn/Gln) amidotransferase subunit C from Deinococcus deserti (strain DSM 17065 / CIP 109153 / LMG 22923 / VCD115).